The chain runs to 874 residues: Alanine--tRNA ligase (874 aa).

His-564, His-568, Cys-665, and His-669 together coordinate Zn(2+).

It belongs to the class-II aminoacyl-tRNA synthetase family. The cofactor is Zn(2+).

The protein resides in the cytoplasm. It catalyses the reaction tRNA(Ala) + L-alanine + ATP = L-alanyl-tRNA(Ala) + AMP + diphosphate. Catalyzes the attachment of alanine to tRNA(Ala) in a two-step reaction: alanine is first activated by ATP to form Ala-AMP and then transferred to the acceptor end of tRNA(Ala). Also edits incorrectly charged Ser-tRNA(Ala) and Gly-tRNA(Ala) via its editing domain. The sequence is that of Alanine--tRNA ligase from Acidovorax sp. (strain JS42).